Consider the following 335-residue polypeptide: Tetraacyldisaccharide 4'-kinase (335 aa).

59-66 (TAGGNGKT) contributes to the ATP binding site.

Belongs to the LpxK family.

It carries out the reaction a lipid A disaccharide + ATP = a lipid IVA + ADP + H(+). The protein operates within glycolipid biosynthesis; lipid IV(A) biosynthesis; lipid IV(A) from (3R)-3-hydroxytetradecanoyl-[acyl-carrier-protein] and UDP-N-acetyl-alpha-D-glucosamine: step 6/6. Functionally, transfers the gamma-phosphate of ATP to the 4'-position of a tetraacyldisaccharide 1-phosphate intermediate (termed DS-1-P) to form tetraacyldisaccharide 1,4'-bis-phosphate (lipid IVA). This Aliivibrio salmonicida (strain LFI1238) (Vibrio salmonicida (strain LFI1238)) protein is Tetraacyldisaccharide 4'-kinase.